The chain runs to 619 residues: N-acetylmuramoyl-L-alanine amidase domain-containing protein SAOUHSC_02979 (619 aa).

A signal peptide spans Met-1 to Ala-27. 3 disordered regions span residues Ala-25–Asp-83, Ser-134–Asp-226, and Glu-238–Asp-290. 3 stretches are compositionally biased toward basic and acidic residues: residues Pro-30–Lys-65, Asn-73–Asp-82, and Glu-137–Thr-146. Low complexity predominate over residues Asn-147–Ser-156. Residues Ile-157 to Lys-175 are compositionally biased toward basic and acidic residues. A compositionally biased stretch (polar residues) spans Ala-176–Asn-192. Residues Gln-214–Asp-226 are compositionally biased toward low complexity. Positions Glu-238 to Asn-260 are enriched in basic and acidic residues. The tract at residues Ile-327 to Leu-468 is N-acetylmuramoyl-L-alanine amidase. The Peptidase C51 domain maps to Asp-488 to Thr-617.

This sequence in the N-terminal section; belongs to the N-acetylmuramoyl-L-alanine amidase 2 family.

It is found in the secreted. The polypeptide is N-acetylmuramoyl-L-alanine amidase domain-containing protein SAOUHSC_02979 (Staphylococcus aureus (strain NCTC 8325 / PS 47)).